Consider the following 537-residue polypeptide: CTP synthase (537 aa).

The segment at 1–268 (MPFKCIFLTG…ANFIGEKLKL (268 aa)) is amidoligase domain. Serine 14 is a CTP binding site. Serine 14 lines the UTP pocket. Residues 15 to 20 (SLGKGL) and aspartate 72 each bind ATP. Mg(2+) is bound by residues aspartate 72 and glutamate 142. Residues 149–151 (DIE), 188–193 (KSKPTQ), and lysine 224 contribute to the CTP site. Residues 188-193 (KSKPTQ) and lysine 224 each bind UTP. In terms of domain architecture, Glutamine amidotransferase type-1 spans 293 to 533 (KIGVVGKYVQ…IEAALVYSKD (241 aa)). L-glutamine is bound at residue glycine 352. The Nucleophile; for glutamine hydrolysis role is filled by cysteine 379. L-glutamine is bound by residues 380 to 383 (LGMQ), glutamate 403, and arginine 461. Residues histidine 506 and glutamate 508 contribute to the active site.

It belongs to the CTP synthase family. In terms of assembly, homotetramer.

The catalysed reaction is UTP + L-glutamine + ATP + H2O = CTP + L-glutamate + ADP + phosphate + 2 H(+). The enzyme catalyses L-glutamine + H2O = L-glutamate + NH4(+). It catalyses the reaction UTP + NH4(+) + ATP = CTP + ADP + phosphate + 2 H(+). It participates in pyrimidine metabolism; CTP biosynthesis via de novo pathway; CTP from UDP: step 2/2. With respect to regulation, allosterically activated by GTP, when glutamine is the substrate; GTP has no effect on the reaction when ammonia is the substrate. The allosteric effector GTP functions by stabilizing the protein conformation that binds the tetrahedral intermediate(s) formed during glutamine hydrolysis. Inhibited by the product CTP, via allosteric rather than competitive inhibition. Functionally, catalyzes the ATP-dependent amination of UTP to CTP with either L-glutamine or ammonia as the source of nitrogen. Regulates intracellular CTP levels through interactions with the four ribonucleotide triphosphates. The sequence is that of CTP synthase from Chlamydia pneumoniae (Chlamydophila pneumoniae).